A 491-amino-acid chain; its full sequence is MTTDINGTALAVFIFFFVLVTVMGFVASRWRKPETLAHIDEWGLGGRNFGTWITWFLVGGDFYTAYTVIAVPALVYTVGAYGFFALPYTIVVYPFVFMVMPVLWKRAKDFGYVTAGDVVHGQYGSRGLELAVAATGVIATMPYIALQLVGMTAVLKALGLHGELPLAIAFIVLALYTYSAGLRAPALIAFVKDIMIYIVVIAAVALIPSKLGGYANVFASADAAFQAKGSGNLLLGGNQYVAYATLALGSALAAFMYPHTLTGIFASNSGKTIRKNAIMLPAYTLLLGLLALLGYMGHAANLKLDSANDVVPTLFKTLFSGWFSGFAFAAIAIGALVPAAVMSIGAANLFTRNFWKAYVDPDVSDAGEAKVAKITSLVVKVGALLVIIFLPTQFALDLQLLGGIWILQTLPALVFGLYTNWFRAPGLLAGWFVGFGGGTFLVWDAGWKPLHLISLGGEPFTVYTGLLALAANIAVAVVVNALLPAKAPVRA.

13 helical membrane passes run 7–27 (GTAL…GFVA), 55–75 (WFLV…PALV), 83–103 (FFAL…MPVL), 130–150 (LAVA…QLVG), 157–177 (ALGL…ALYT), 187–207 (LIAF…VALI), 246–266 (LALG…GIFA), 277–297 (AIML…GYMG), 322–342 (WFSG…AAVM), 374–396 (ITSL…QFAL), 400–422 (LLGG…TNWF), 427–447 (LLAG…DAGW), and 465–485 (GLLA…LLPA).

Belongs to the sodium:solute symporter (SSF) (TC 2.A.21) family.

It localises to the cell membrane. Its activity is regulated as follows. Inhibited by CCCP, but is apparently not affected by the concentration of sodium. Functionally, low-affinity transporter of alanine and high-affinity transporter of lactate and pyruvate. Can also transport other monocarboxylates such as propionate, butyrate, alpha-hydroxybutyrate or acetate. May be proton coupled. Required for optimal growth on alanine or pyruvate and ammonia. The chain is Monocarboxylate transport permease protein from Rhizobium johnstonii (strain DSM 114642 / LMG 32736 / 3841) (Rhizobium leguminosarum bv. viciae).